A 490-amino-acid chain; its full sequence is Betaine aldehyde dehydrogenase (490 aa).

K(+) contacts are provided by serine 26, isoleucine 27, and aspartate 93. NAD(+) is bound at residue glycine 150–tryptophan 152. Catalysis depends on lysine 162, which acts as the Charge relay system. Residue lysine 176–glutamate 179 coordinates NAD(+). K(+) is bound at residue valine 180. Glycine 230 to threonine 233 provides a ligand contact to NAD(+). Residue leucine 246 participates in K(+) binding. Residue glutamate 252 is the Proton acceptor of the active site. NAD(+) contacts are provided by glycine 254, cysteine 286, and glutamate 387. Cysteine 286 functions as the Nucleophile in the catalytic mechanism. Cysteine 286 carries the cysteine sulfenic acid (-SOH) modification. Positions 457 and 460 each coordinate K(+). Catalysis depends on glutamate 464, which acts as the Charge relay system.

It belongs to the aldehyde dehydrogenase family. As to quaternary structure, dimer of dimers. K(+) serves as cofactor.

It carries out the reaction betaine aldehyde + NAD(+) + H2O = glycine betaine + NADH + 2 H(+). Its pathway is amine and polyamine biosynthesis; betaine biosynthesis via choline pathway; betaine from betaine aldehyde: step 1/1. Its function is as follows. Involved in the biosynthesis of the osmoprotectant glycine betaine. Catalyzes the irreversible oxidation of betaine aldehyde to the corresponding acid. The polypeptide is Betaine aldehyde dehydrogenase (Pseudomonas syringae pv. tomato (strain ATCC BAA-871 / DC3000)).